We begin with the raw amino-acid sequence, 693 residues long: Elongation factor G (693 aa).

Residues 8-282 enclose the tr-type G domain; sequence EKTRNIGIMA…AVIDYLPSPL (275 aa). GTP-binding positions include 17–24, 81–85, and 135–138; these read AHVDAGKT, DTPGH, and NKMD.

The protein belongs to the TRAFAC class translation factor GTPase superfamily. Classic translation factor GTPase family. EF-G/EF-2 subfamily.

The protein resides in the cytoplasm. Functionally, catalyzes the GTP-dependent ribosomal translocation step during translation elongation. During this step, the ribosome changes from the pre-translocational (PRE) to the post-translocational (POST) state as the newly formed A-site-bound peptidyl-tRNA and P-site-bound deacylated tRNA move to the P and E sites, respectively. Catalyzes the coordinated movement of the two tRNA molecules, the mRNA and conformational changes in the ribosome. The sequence is that of Elongation factor G from Streptococcus pneumoniae (strain P1031).